A 532-amino-acid chain; its full sequence is Bifunctional purine biosynthesis protein PurH (532 aa).

An MGS-like domain is found at 1 to 147 (MADRPIRQAL…KNHKDVAIVV (147 aa)).

This sequence belongs to the PurH family.

It carries out the reaction (6R)-10-formyltetrahydrofolate + 5-amino-1-(5-phospho-beta-D-ribosyl)imidazole-4-carboxamide = 5-formamido-1-(5-phospho-D-ribosyl)imidazole-4-carboxamide + (6S)-5,6,7,8-tetrahydrofolate. The enzyme catalyses IMP + H2O = 5-formamido-1-(5-phospho-D-ribosyl)imidazole-4-carboxamide. The protein operates within purine metabolism; IMP biosynthesis via de novo pathway; 5-formamido-1-(5-phospho-D-ribosyl)imidazole-4-carboxamide from 5-amino-1-(5-phospho-D-ribosyl)imidazole-4-carboxamide (10-formyl THF route): step 1/1. Its pathway is purine metabolism; IMP biosynthesis via de novo pathway; IMP from 5-formamido-1-(5-phospho-D-ribosyl)imidazole-4-carboxamide: step 1/1. In Haemophilus influenzae (strain ATCC 51907 / DSM 11121 / KW20 / Rd), this protein is Bifunctional purine biosynthesis protein PurH.